A 351-amino-acid polypeptide reads, in one-letter code: Transmembrane protein 255A (351 aa).

Helical transmembrane passes span 30-50, 57-77, 89-109, and 226-246; these read IYVT…GLAA, VTVG…LGII, LVAS…CAIV, and TILN…LGGF. The disordered stretch occupies residues 302-331; that stretch reads FPSSPPSGLSDEQEPQSPSPSPSYMWSSSA.

Belongs to the TMEM255 family.

The protein localises to the membrane. The chain is Transmembrane protein 255A (Tmem255a) from Mus musculus (Mouse).